Here is a 67-residue protein sequence, read N- to C-terminus: Large ribosomal subunit protein uL29 (67 aa).

The protein belongs to the universal ribosomal protein uL29 family.

This chain is Large ribosomal subunit protein uL29, found in Methanosarcina barkeri (strain Fusaro / DSM 804).